Reading from the N-terminus, the 327-residue chain is DNA-directed RNA polymerase subunit alpha (327 aa).

An alpha N-terminal domain (alpha-NTD) region spans residues 1-227 (MLIAHRPTLI…ELFGLARELN (227 aa)). The segment at 244 to 327 (SDEDLRIPIE…GSYFDPNYGS (84 aa)) is alpha C-terminal domain (alpha-CTD).

It belongs to the RNA polymerase alpha chain family. In terms of assembly, homodimer. The RNAP catalytic core consists of 2 alpha, 1 beta, 1 beta' and 1 omega subunit. When a sigma factor is associated with the core the holoenzyme is formed, which can initiate transcription.

The enzyme catalyses RNA(n) + a ribonucleoside 5'-triphosphate = RNA(n+1) + diphosphate. Functionally, DNA-dependent RNA polymerase catalyzes the transcription of DNA into RNA using the four ribonucleoside triphosphates as substrates. The polypeptide is DNA-directed RNA polymerase subunit alpha (Tropheryma whipplei (strain TW08/27) (Whipple's bacillus)).